Consider the following 643-residue polypeptide: Manganese lipoxygenase (643 aa).

Positions 166 to 643 constitute a Lipoxygenase domain; it reads WYTDEVFAQQ…PEQLANAIVI (478 aa). The Mn(2+) site is built by His-325, His-330, His-510, Asn-514, and Ile-643.

Belongs to the lipoxygenase family. It depends on Mn(2+) as a cofactor.

The enzyme catalyses (9Z,12Z)-octadecadienoate + O2 = (13S)-hydroperoxy-(9Z,11E)-octadecadienoate. In terms of biological role, lipoxygenase that metabolizes linoleic and alpha-linolenic acids to 13S-hydroperoxy fatty acids. The chain is Manganese lipoxygenase from Pleurotus sapidus (Oyster mushroom).